The chain runs to 450 residues: Phosphoglucosamine mutase (450 aa).

Ser-101 functions as the Phosphoserine intermediate in the catalytic mechanism. Residues Ser-101, Asp-240, Asp-242, and Asp-244 each coordinate Mg(2+). Ser-101 carries the phosphoserine modification.

Belongs to the phosphohexose mutase family. Mg(2+) is required as a cofactor. Activated by phosphorylation.

The enzyme catalyses alpha-D-glucosamine 1-phosphate = D-glucosamine 6-phosphate. Catalyzes the conversion of glucosamine-6-phosphate to glucosamine-1-phosphate. The protein is Phosphoglucosamine mutase of Streptococcus equi subsp. zooepidemicus (strain H70).